A 447-amino-acid polypeptide reads, in one-letter code: Signal recognition particle protein (447 aa).

Residues 108–115 (GLQGSGKT), 190–194 (DTAGR), and 248–251 (TKLD) each bind GTP.

This sequence belongs to the GTP-binding SRP family. SRP54 subfamily. Part of the signal recognition particle protein translocation system, which is composed of SRP and FtsY. Interacts with RNA.

Its subcellular location is the cytoplasm. It carries out the reaction GTP + H2O = GDP + phosphate + H(+). Functionally, involved in targeting and insertion of nascent membrane proteins into the cytoplasmic membrane. Binds to the hydrophobic signal sequence of the ribosome-nascent chain (RNC) as it emerges from the ribosomes. The SRP-RNC complex is then targeted to the cytoplasmic membrane where it interacts with the SRP receptor FtsY. This Mycoplasma mycoides protein is Signal recognition particle protein.